The chain runs to 312 residues: Small ribosomal subunit protein RACK1 (312 aa).

WD repeat units lie at residues 9–42, 63–93, 105–135, 148–180, 192–222, 233–262, and 279–307; these read GHRGWVTSLACPQQAGSYIKVVSTSRDGTVISWK, GHTGFVSCVSLAHATDYALTASWDRSIRMWD, KHTKDVLAVAFSPDDRLIVSAGRDNVIRVWN, GHEDWVSSICFSPSLEHPIVVSGSWDNTIKVWN, GHSNYVSTVTVSPDGSLCASGGKDGAALLWD, NVESPINQIGFSPNRFWMCVATERSLSVYD, and PSECISIAWSADGNTLYSGHKDNLIRVWS.

This sequence belongs to the WD repeat G protein beta family. Ribosomal protein RACK1 subfamily.

The polypeptide is Small ribosomal subunit protein RACK1 (Leishmania major).